Reading from the N-terminus, the 331-residue chain is Geranylgeranyl transferase type-2 subunit beta (331 aa).

Position 2 is an N-acetylglycine (G2). Residue T3 is modified to Phosphothreonine. PFTB repeat units follow at residues 20–61 (LEKH…DLMG), 68–109 (REEI…TLYD), 116–157 (VNKV…ALLG), 164–205 (VEKA…AITS), 212–253 (SDLL…KIIG), and 260–302 (REKL…SLLG). 190-192 (HAG) serves as a coordination point for geranylgeranyl diphosphate. Zn(2+) contacts are provided by D238 and C240. 241 to 244 (YSWW) serves as a coordination point for geranylgeranyl diphosphate. Zn(2+) is bound at residue H290.

The protein belongs to the protein prenyltransferase subunit beta family. Heterotrimer composed of RABGGTA, RABGGTB and CHM; within this trimer, RABGGTA and RABGGTB form the catalytic component B, while CHM (component A) mediates peptide substrate binding. The Rab GGTase dimer (RGGT) interacts with CHM (component A) prior to Rab protein binding; the association is stabilized by geranylgeranyl pyrophosphate (GGpp). The CHM:RGGT:Rab complex is destabilized by GGpp. Interaction of RABGGTB with prenylated PTP4A2 precludes its association with RABGGTA and inhibits enzyme activity. Interacts with CHODL. Interacts with non-phosphorylated form of RAB8A; phosphorylation of RAB8A at 'Thr-72' disrupts this interaction. Zn(2+) is required as a cofactor.

The catalysed reaction is geranylgeranyl diphosphate + L-cysteinyl-[protein] = S-geranylgeranyl-L-cysteinyl-[protein] + diphosphate. Its activity is regulated as follows. The enzymatic reaction requires the aid of a Rab escort protein (also called component A). In terms of biological role, catalyzes the transfer of a geranylgeranyl moiety from geranylgeranyl diphosphate to both cysteines of Rab proteins with the C-terminal sequence -XXCC, -XCXC and -CCXX, such as RAB1A, RAB3A, RAB5A and RAB7A. The sequence is that of Geranylgeranyl transferase type-2 subunit beta (RABGGTB) from Homo sapiens (Human).